The following is a 1196-amino-acid chain: Phosphoglucan, water dikinase, chloroplastic (1196 aa).

The N-terminal 54 residues, methionine 1–alanine 54, are a transit peptide targeting the chloroplast. Threonine 55 carries the post-translational modification N-acetylthreonine. In terms of domain architecture, CBM20 spans lysine 66–alanine 166. Positions proline 174–valine 200 are disordered. Residues aspartate 185–valine 200 show a composition bias toward basic and acidic residues. Histidine 759 serves as the catalytic Tele-phosphohistidine intermediate. The interval leucine 804–tyrosine 855 is disordered.

Belongs to the PEP-utilizing enzyme family. As to quaternary structure, homodimer. Mg(2+) is required as a cofactor. As to expression, in all starch containing tissues (e.g. roots, leaves, stems, inflorescence and siliques).

The protein localises to the plastid. It is found in the chloroplast. The catalysed reaction is [(1-&gt;4)-6-phospho-alpha-D-glucosyl](n) + n ATP + n H2O = [(1-&gt;4)-3,6-bisphospho-alpha-D-glucosyl](n) + n AMP + n phosphate + 2n H(+). Mediates the incorporation of phosphate into starch-like phospho-alpha-glucan, mostly at the C-3 position of glucose units. Required for starch degradation, suggesting that the phosphate content of starch regulates its degradability. In Arabidopsis thaliana (Mouse-ear cress), this protein is Phosphoglucan, water dikinase, chloroplastic (GWD3).